The primary structure comprises 329 residues: 4-hydroxythreonine-4-phosphate dehydrogenase (329 aa).

Substrate-binding residues include His-136 and Thr-137. The a divalent metal cation site is built by His-166, His-211, and His-266. 3 residues coordinate substrate: Lys-274, Asn-283, and Arg-292.

The protein belongs to the PdxA family. In terms of assembly, homodimer. It depends on Zn(2+) as a cofactor. The cofactor is Mg(2+). Requires Co(2+) as cofactor.

It is found in the cytoplasm. The enzyme catalyses 4-(phosphooxy)-L-threonine + NAD(+) = 3-amino-2-oxopropyl phosphate + CO2 + NADH. The protein operates within cofactor biosynthesis; pyridoxine 5'-phosphate biosynthesis; pyridoxine 5'-phosphate from D-erythrose 4-phosphate: step 4/5. Catalyzes the NAD(P)-dependent oxidation of 4-(phosphooxy)-L-threonine (HTP) into 2-amino-3-oxo-4-(phosphooxy)butyric acid which spontaneously decarboxylates to form 3-amino-2-oxopropyl phosphate (AHAP). The chain is 4-hydroxythreonine-4-phosphate dehydrogenase from Salmonella typhi.